We begin with the raw amino-acid sequence, 220 residues long: MDLLFGRRKTPEELLRQNQRALTRAMRELDRERQKLEAQEKKIIIDIKKMAKQGQMDAVKIMAKDLVRTRRYVKKFITMRANVQAVSLKIQTLKSNNSMALAMKGVTKAMATMNRQLKLPQIQKIMMEFEKQAGIMDMKEELMNDAIDDAMGDEDDEEESDAVVSQVLDELGLNLTDELATLPPPGGSLAAGEGRAAEAAAALADADADLEERLKNLRRD.

Methionine 1 bears the N-acetylmethionine mark. 2 coiled-coil regions span residues 12-52 (EELL…KMAK) and 195-220 (RAAE…LRRD). An MIT-interacting motif motif is present at residues 208-218 (ADLEERLKNLR).

The protein belongs to the SNF7 family. As to quaternary structure, probable core component of the endosomal sorting required for transport complex III (ESCRT-III). ESCRT-III components are thought to multimerize to form a flat lattice on the perimeter membrane of the endosome.

Its subcellular location is the late endosome membrane. It localises to the cytoplasm. Functionally, probable core component of the endosomal sorting required for transport complex III (ESCRT-III) which is involved in multivesicular bodies (MVBs) formation and sorting of endosomal cargo proteins into MVBs. MVBs contain intraluminal vesicles (ILVs) that are generated by invagination and scission from the limiting membrane of the endosome and mostly are delivered to lysosomes enabling degradation of membrane proteins, such as stimulated growth factor receptors, lysosomal enzymes and lipids. The protein is Charged multivesicular body protein 2a (CHMP2A) of Gallus gallus (Chicken).